The following is a 494-amino-acid chain: Probable malate:quinone oxidoreductase (494 aa).

This sequence belongs to the MQO family. It depends on FAD as a cofactor.

It carries out the reaction (S)-malate + a quinone = a quinol + oxaloacetate. The protein operates within carbohydrate metabolism; tricarboxylic acid cycle; oxaloacetate from (S)-malate (quinone route): step 1/1. In Kocuria rhizophila (strain ATCC 9341 / DSM 348 / NBRC 103217 / DC2201), this protein is Probable malate:quinone oxidoreductase.